We begin with the raw amino-acid sequence, 211 residues long: SsrA-binding protein (211 aa).

Disordered regions lie at residues 1-20 and 170-211; these read MHRRSSKSYSSRNSKTPERS and RLRR…RHEN. Residues 177–187 are compositionally biased toward polar residues; it reads QRNTQRSVTPR.

This sequence belongs to the SmpB family.

The protein resides in the cytoplasm. In terms of biological role, required for rescue of stalled ribosomes mediated by trans-translation. Binds to transfer-messenger RNA (tmRNA), required for stable association of tmRNA with ribosomes. tmRNA and SmpB together mimic tRNA shape, replacing the anticodon stem-loop with SmpB. tmRNA is encoded by the ssrA gene; the 2 termini fold to resemble tRNA(Ala) and it encodes a 'tag peptide', a short internal open reading frame. During trans-translation Ala-aminoacylated tmRNA acts like a tRNA, entering the A-site of stalled ribosomes, displacing the stalled mRNA. The ribosome then switches to translate the ORF on the tmRNA; the nascent peptide is terminated with the 'tag peptide' encoded by the tmRNA and targeted for degradation. The ribosome is freed to recommence translation, which seems to be the essential function of trans-translation. This is SsrA-binding protein from Tropheryma whipplei (strain TW08/27) (Whipple's bacillus).